The chain runs to 237 residues: MWTMFNNWKIFEDNLGFVPSEEIKDKLNEYYKILVEENLKYNLTRITNEEDVYEKHFLDSLLFTKETKIDNQKIIDIGTGPGFPGIVLKIFFPETDITLIDSNNKKINFLNIVIKKLNLKQIEAKHARAEELARIENEKYDIAISRAVAYLDVILELAVRFLKIQGKLILLKGPRADEEIKNSKNIDQKLKIKLTNKQSLADTGFGERINLFYEKEKSTPELYPREYAKIVKESGKK.

S-adenosyl-L-methionine contacts are provided by residues glycine 78, phenylalanine 83, 129–130, and arginine 146; that span reads AE.

Belongs to the methyltransferase superfamily. RNA methyltransferase RsmG family.

The protein resides in the cytoplasm. In terms of biological role, specifically methylates the N7 position of a guanine in 16S rRNA. The sequence is that of Ribosomal RNA small subunit methyltransferase G from Mesoplasma florum (strain ATCC 33453 / NBRC 100688 / NCTC 11704 / L1) (Acholeplasma florum).